A 473-amino-acid polypeptide reads, in one-letter code: Cannabinoid receptor 1 (473 aa).

Topologically, residues 1–118 (MKSILDGLAD…CFMILNPSQQ (118 aa)) are extracellular. The required for mitochondrial localization stretch occupies residues 2–23 (KSILDGLADTTFRTITTDLLYV). N-linked (GlcNAc...) asparagine glycosylation is found at N79 and N85. A helical membrane pass occupies residues 119-144 (LAIAVLSLTLGTFTVLENLLVLCVIL). The Cytoplasmic portion of the chain corresponds to 145–156 (HSRSLRCRPSYH). A helical transmembrane segment spans residues 157-177 (FIGSLAVADLLGSVIFVYSFV). The Extracellular portion of the chain corresponds to 178-189 (DFHVFHRKDSPN). A helical membrane pass occupies residues 190-214 (VFLFKLGGVTASFTASVGSLFLTAI). Residues 215–234 (DRYISIHRPLAYKRIVTRPK) are Cytoplasmic-facing. A helical membrane pass occupies residues 235–257 (AVVAFCVMWTIAIVIAVLPLLGW). Residues 258-275 (NCKKLNSVCSDIFPLIDE) lie on the Extracellular side of the membrane. Residues 276–301 (TYLMFWIGVTSILLLFIVYAYMYILW) traverse the membrane as a helical segment. Residues 302 to 346 (KAHSHAVRMLQRGTQKSIIIQSTEDGKVQITRPDQTRMDIRLAKT) lie on the Cytoplasmic side of the membrane. A helical membrane pass occupies residues 347–367 (LVLILVVLIICWGPLLAIMVY). The Extracellular portion of the chain corresponds to 368–379 (DVFGKMNKLIKT). The chain crosses the membrane as a helical span at residues 380–401 (IFAFCSMLCLLNSTVNPIIYAL). Over 402–473 (RSKDLRHAFR…VSTDTTAEAL (72 aa)) the chain is Cytoplasmic. A lipid anchor (S-palmitoyl cysteine) is attached at C417.

This sequence belongs to the G-protein coupled receptor 1 family. Palmitoylation at Cys-417 is important for recruitment at both plasma membrane and lipid rafts and association with G protein alpha subunits.

Its subcellular location is the cell membrane. It is found in the mitochondrion outer membrane. The protein localises to the cell projection. The protein resides in the axon. It localises to the presynapse. In terms of biological role, G-protein coupled receptor for cannabinoids. Mediates many cannabinoid-induced effects in the central nervous system (CNS), as well as in peripheral tissues. Regulates cellular respiration and energy production in response to cannabinoids. Signaling typically involves reduction in cyclic AMP. In Taeniopygia guttata (Zebra finch), this protein is Cannabinoid receptor 1 (CNR1).